The primary structure comprises 318 residues: Aspartate carbamoyltransferase catalytic subunit (318 aa).

Carbamoyl phosphate is bound by residues Arg-59 and Thr-60. Lys-87 contributes to the L-aspartate binding site. Carbamoyl phosphate-binding residues include Arg-109, His-137, and Gln-140. Residues Arg-170 and Arg-224 each contribute to the L-aspartate site. Positions 265 and 266 each coordinate carbamoyl phosphate.

This sequence belongs to the aspartate/ornithine carbamoyltransferase superfamily. ATCase family. As to quaternary structure, heterododecamer (2C3:3R2) of six catalytic PyrB chains organized as two trimers (C3), and six regulatory PyrI chains organized as three dimers (R2).

The enzyme catalyses carbamoyl phosphate + L-aspartate = N-carbamoyl-L-aspartate + phosphate + H(+). Its pathway is pyrimidine metabolism; UMP biosynthesis via de novo pathway; (S)-dihydroorotate from bicarbonate: step 2/3. In terms of biological role, catalyzes the condensation of carbamoyl phosphate and aspartate to form carbamoyl aspartate and inorganic phosphate, the committed step in the de novo pyrimidine nucleotide biosynthesis pathway. The polypeptide is Aspartate carbamoyltransferase catalytic subunit (Rhizobium rhizogenes (strain K84 / ATCC BAA-868) (Agrobacterium radiobacter)).